Here is an 859-residue protein sequence, read N- to C-terminus: Paladin (859 aa).

The tract at residues Met1 to Ser34 is disordered. Gly2 carries the N-myristoyl glycine lipid modification. At Ser89 the chain carries Phosphoserine.

The protein belongs to the paladin family. Vascular expression detected in the central nervous system, kidney, lung, heart, skeletal muscle, white adipose tissue (WAT), brown adipose tissue, liver, pancreas and spleen. Not expressed in all vessels: for instance, not expressed in capillaries in the brain, and expressed mainly in large vessels in the heart, WAT, liver, pancreas and kidney. Predominant nonvascular expression in myocardium and lung mesenchyme. In large vessels, primarily expressed by smooth muscle cells, but occasionally detected at low levels in the endothelium. Expressed in various cells of the hematopoietic lineage.

The protein localises to the cytoplasm. It localises to the cytosol. The protein is Paladin (Pald1) of Mus musculus (Mouse).